Here is a 218-residue protein sequence, read N- to C-terminus: Peptidyl-prolyl cis-trans isomerase FKBP7 (218 aa).

A signal peptide spans 1–19; that stretch reads MNLLFRLAVFLSLWCCSDA. N-linked (GlcNAc...) asparagine glycosylation is found at Asn41 and Asn128. Residues 49–141 enclose the PPIase FKBP-type domain; the sequence is GDLLNAHYDG…MFEIELYAVT (93 aa). EF-hand domains lie at 141 to 176 and 185 to 218; these read TKGPRSIETFKQIDTDNDRQLSKAEIELYLQKDFEK and YQKAVLEDIFKKNDHNGDGFISPKEYNVHQHDEL. Asp154, Asp156, Asp158, Gln160, Glu165, Asp198, Asn200, Asp202, and Glu209 together coordinate Ca(2+). Residues 197–218 form a disordered region; sequence NDHNGDGFISPKEYNVHQHDEL. Residues 215-218 carry the Prevents secretion from ER motif; the sequence is HDEL.

Glycosylated. Expressed at highest levels in heart, lung and testis. Weakly expressed in kidney and lymph node. Little or no expression detected in brain, thymus, spleen and liver.

The protein resides in the endoplasmic reticulum lumen. The enzyme catalyses [protein]-peptidylproline (omega=180) = [protein]-peptidylproline (omega=0). Functionally, PPIases accelerate the folding of proteins during protein synthesis. The protein is Peptidyl-prolyl cis-trans isomerase FKBP7 (Fkbp7) of Mus musculus (Mouse).